Here is a 118-residue protein sequence, read N- to C-terminus: Small ribosomal subunit protein uS13 (118 aa).

The interval 93–118 (KKLPVRGQRTKTNARTRKGPRKLMKK) is disordered.

The protein belongs to the universal ribosomal protein uS13 family. Part of the 30S ribosomal subunit. Forms a loose heterodimer with protein S19. Forms two bridges to the 50S subunit in the 70S ribosome.

In terms of biological role, located at the top of the head of the 30S subunit, it contacts several helices of the 16S rRNA. In the 70S ribosome it contacts the 23S rRNA (bridge B1a) and protein L5 of the 50S subunit (bridge B1b), connecting the 2 subunits; these bridges are implicated in subunit movement. Contacts the tRNAs in the A and P-sites. This Buchnera aphidicola subsp. Baizongia pistaciae (strain Bp) protein is Small ribosomal subunit protein uS13.